The following is a 723-amino-acid chain: Polyribonucleotide nucleotidyltransferase (723 aa).

2 residues coordinate Mg(2+): D497 and D503. Positions 564–623 constitute a KH domain; it reads PRLLSFRIDPELIGTVIGPGGRTIKGITERTNTKIDIEDGGIVTIASHDGAAAEAAQRII. The 69-residue stretch at 633 to 701 folds into the S1 motif domain; sequence GEVFTGTITR…NRGRINLTLR (69 aa). The disordered stretch occupies residues 701 to 723; the sequence is RGVPQNGEETQSEPAPTPVAPLN.

Belongs to the polyribonucleotide nucleotidyltransferase family. Requires Mg(2+) as cofactor.

Its subcellular location is the cytoplasm. It carries out the reaction RNA(n+1) + phosphate = RNA(n) + a ribonucleoside 5'-diphosphate. Functionally, involved in mRNA degradation. Catalyzes the phosphorolysis of single-stranded polyribonucleotides processively in the 3'- to 5'-direction. The chain is Polyribonucleotide nucleotidyltransferase from Prochlorococcus marinus (strain MIT 9313).